A 455-amino-acid polypeptide reads, in one-letter code: Beta-1,4-mannosyltransferase bre-3 (455 aa).

Belongs to the glycosyltransferase 2 family.

The protein resides in the cytoplasm. Its pathway is protein modification; protein glycosylation. Its function is as follows. Glycosyltransferase with a proposed role in glycosphingolipid biosynthesis. Involved in susceptibility to pore-forming crystal toxins in conjunction with bre-1, bre-2 and bre-4. Involved in resistance to the nematotoxic C.cinerea galectin Cgl2. Has a role in determining brood size. This Caenorhabditis briggsae protein is Beta-1,4-mannosyltransferase bre-3.